Here is a 1940-residue protein sequence, read N- to C-terminus: Cilia- and flagella-associated protein 74 (1940 aa).

A disordered region spans residues 52-90 (GSPAVTLRRAKAAAAANGTSSPGIRGSPSPARGPGGRLP). Low complexity predominate over residues 63 to 90 (AAAAANGTSSPGIRGSPSPARGPGGRLP). Residues 100–159 (ANVEQLKRRLQTVVAEVEGHQQRYDKVLLEANKATDLVHSMEAEIESLYVEAEELARRVP) are a coiled coil. Disordered regions lie at residues 512–548 (VAGL…QSLT), 1159–1336 (SPHV…AAAE), 1373–1418 (PQSQ…AAPP), 1714–1737 (AGDK…GASK), and 1894–1940 (PGSR…KKAV). A compositionally biased stretch (low complexity) spans 535-548 (SLTQQLAATQQSLT). Positions 1205–1220 (DGGGGGAMANGNGSGG) are enriched in gly residues. The segment covering 1227–1236 (DGEPEDGEGD) has biased composition (acidic residues). Positions 1260–1271 (GRGGRGGRGGAA) are enriched in gly residues. Acidic residues predominate over residues 1272 to 1282 (GEDEDEDEDAG). The segment covering 1287 to 1304 (RGKSSSSSKASSGRRSSS) has biased composition (low complexity). The span at 1321–1335 (VPDDDDADAEAEAAA) shows a compositional bias: acidic residues. Low complexity predominate over residues 1373 to 1414 (PQSQNPTPSQSQSGQAPAASAPSDGASGAAAAAETAASSGPA). Composition is skewed to pro residues over residues 1720-1731 (TPAPGIKPPATP) and 1896-1912 (SRPP…PAPE). The segment covering 1913–1929 (PVAASGPGAGAAGVKKL) has biased composition (low complexity). Pro residues predominate over residues 1930-1940 (VPPPSPPKKAV).

This sequence belongs to the CFAP74 family. In terms of assembly, part of the PDCP1 complex composed of CFAP46, CFAP54, CFAP74 and CFAP221; the PDCP1 complex binds calmodulin.

The protein resides in the cytoplasm. It localises to the cytoskeleton. It is found in the cilium axoneme. As part of the central apparatus of the cilium axoneme may play a role in cilium movement and thereby cell motility. In Chlamydomonas reinhardtii (Chlamydomonas smithii), this protein is Cilia- and flagella-associated protein 74.